The following is a 338-amino-acid chain: Phenylalanine--tRNA ligase alpha subunit (338 aa).

Glutamate 253 serves as a coordination point for Mg(2+).

Belongs to the class-II aminoacyl-tRNA synthetase family. Phe-tRNA synthetase alpha subunit type 1 subfamily. Tetramer of two alpha and two beta subunits. Mg(2+) serves as cofactor.

The protein localises to the cytoplasm. The enzyme catalyses tRNA(Phe) + L-phenylalanine + ATP = L-phenylalanyl-tRNA(Phe) + AMP + diphosphate + H(+). This Gloeobacter violaceus (strain ATCC 29082 / PCC 7421) protein is Phenylalanine--tRNA ligase alpha subunit.